Reading from the N-terminus, the 441-residue chain is Alpha-monoglucosyldiacylglycerol synthase (441 aa).

It belongs to the glycosyltransferase group 1 family. Glycosyltransferase 4 subfamily. The cofactor is Mg(2+).

Its subcellular location is the cell membrane. It carries out the reaction a 1,2-diacyl-sn-glycerol + UDP-alpha-D-glucose = a 1,2-diacyl-3-O-(alpha-D-glucopyranosyl)-sn-glycerol + UDP + H(+). Its activity is regulated as follows. Activated by the negatively charged lipid phosphatidylglycerol (PG). Functionally, glucosyltransferase involved in the biosynthesis of the non-bilayer-prone membrane lipid alpha-monoglucosyldiacylglycerol. This is a major component for maintaining a certain anionic lipid surface charge density, for balancing the bilayer to non-bilayer phase equilibria and for keeping a constant lipid bilayer spontaneous curvature (curvature packing stress). Catalyzes the transfer of a glucosyl residue from UDP-Glc to diacylglycerol (DAG) acceptor to form the corresponding alpha-glucosyl-DAG (1,2-diacyl-3-O-(alpha-D-glucopyranosyl)-sn-glycerol). It can only use UDP-Glc as sugar donor. The chain is Alpha-monoglucosyldiacylglycerol synthase from Streptococcus pneumoniae (strain ATCC BAA-255 / R6).